The chain runs to 475 residues: MKVLFAASESHPFVKTGGLADVIGTLPRYLKKIGVDVRVVIPKYSAIKSHLASEFNFIKYFYVPVGWRNKYCGIFQCEYMGVIYYLIDNEYYFFRDELYGYYDDGERFAFFDRAVLDMLWQINYKPDIIHCNDWHTGMIPVLYKIQYKQSSFYRGVKFVFSIHNLLFQGNFDKNILGELFNLDGSLYENGSVELNGAVSFMKSGINYSDKISTVSRSYAFEIQSPEYGENLDGLLRSRSSDLWGIVNGIDYDIYNPEKDNMIFRNYNKNNLRNKMINKLKIQNDLNLDINENVPVLAIISRFTPQKGMDIIKTIGERLVSKHVQLIVLGTGYNEYEEYFRYLSSKYPRNVSTNIYFDDVLAHKIYAASDMFLMPSLFEPCGLGQLIALRYGTIPIVRETGGLKDTIIPYNKYTGEGNGFSFANFDGDDLLRIINDAVDYFEEKDIWNNIVTHAMESNNSWDNSAKPYKSLYESLL.

An ADP-alpha-D-glucose-binding site is contributed by lysine 15.

It belongs to the glycosyltransferase 1 family. Bacterial/plant glycogen synthase subfamily.

It catalyses the reaction [(1-&gt;4)-alpha-D-glucosyl](n) + ADP-alpha-D-glucose = [(1-&gt;4)-alpha-D-glucosyl](n+1) + ADP + H(+). Its pathway is glycan biosynthesis; glycogen biosynthesis. Synthesizes alpha-1,4-glucan chains using ADP-glucose. This Clostridium kluyveri (strain ATCC 8527 / DSM 555 / NBRC 12016 / NCIMB 10680 / K1) protein is Glycogen synthase.